The sequence spans 51 residues: Large ribosomal subunit protein bL33 (51 aa).

Residues 1–23 are disordered; sequence MREKIKLESSAGTGHFYTTTKNK. Polar residues predominate over residues 10–20; sequence SAGTGHFYTTT.

It belongs to the bacterial ribosomal protein bL33 family.

This Methylobacillus flagellatus (strain ATCC 51484 / DSM 6875 / VKM B-1610 / KT) protein is Large ribosomal subunit protein bL33.